The following is a 92-amino-acid chain: Small ribosomal subunit protein uS19 (92 aa).

Belongs to the universal ribosomal protein uS19 family.

Its function is as follows. Protein S19 forms a complex with S13 that binds strongly to the 16S ribosomal RNA. This Staphylococcus aureus (strain Mu3 / ATCC 700698) protein is Small ribosomal subunit protein uS19.